The following is a 205-amino-acid chain: Putative 3-methyladenine DNA glycosylase (205 aa).

This sequence belongs to the DNA glycosylase MPG family.

This chain is Putative 3-methyladenine DNA glycosylase, found in Bacillus cereus (strain G9842).